Consider the following 611-residue polypeptide: Putative clathrin assembly protein At4g02650 (611 aa).

Positions Gly26 to Lys162 constitute an ENTH domain. 2 disordered regions span residues Gly158 to Thr184 and Thr337 to Leu406. Residues Met386 to Gln401 show a composition bias toward basic and acidic residues.

It is found in the membrane. The protein localises to the clathrin-coated pit. It localises to the golgi apparatus. Its subcellular location is the cytoplasmic vesicle. The protein resides in the clathrin-coated vesicle. The sequence is that of Putative clathrin assembly protein At4g02650 from Arabidopsis thaliana (Mouse-ear cress).